The sequence spans 136 residues: Cell wall synthesis protein CwsA (136 aa).

Residues 94–114 form a helical membrane-spanning segment; the sequence is LLIAAVAVTVLGGGAAAFSIV.

It belongs to the CwsA family. As to quaternary structure, interacts with CrgA and Wag31.

Its subcellular location is the cell membrane. Its function is as follows. Required for regulated cell division, cell wall synthesis and the maintenance of cell shape. In Mycolicibacterium smegmatis (strain ATCC 700084 / mc(2)155) (Mycobacterium smegmatis), this protein is Cell wall synthesis protein CwsA.